The following is a 121-amino-acid chain: Glycine cleavage system H protein (121 aa).

The region spanning 22 to 102 is the Lipoyl-binding domain; sequence IAWVGITKYA…DSSVWLFKAE (81 aa). Lys-63 carries the N6-lipoyllysine modification.

The protein belongs to the GcvH family. As to quaternary structure, the glycine cleavage system is composed of four proteins: P, T, L and H. It depends on (R)-lipoate as a cofactor.

Functionally, the glycine cleavage system catalyzes the degradation of glycine. The H protein shuttles the methylamine group of glycine from the P protein to the T protein. The sequence is that of Glycine cleavage system H protein from Tropheryma whipplei (strain TW08/27) (Whipple's bacillus).